Here is a 312-residue protein sequence, read N- to C-terminus: Small ribosomal subunit protein RACK1 (312 aa).

WD repeat units lie at residues 9–42 (GHRG…ISWK), 63–93 (GHTG…RMWD), 105–135 (KHTK…RVWN), 148–180 (GHED…KVWN), 192–222 (GHSN…LLWD), 233–262 (NVES…SVYD), and 279–307 (PSEC…RVWS).

It belongs to the WD repeat G protein beta family. Ribosomal protein RACK1 subfamily.

The protein is Small ribosomal subunit protein RACK1 of Leishmania chagasi.